A 418-amino-acid polypeptide reads, in one-letter code: MIFDKDDFKAYDADLWNAIAKEEERQQNNIELIASENVVSKAVMAAQGSILTNKYAEGYPGRRYYGGTDVVDVVETLAIERAKEIFGAKFANVQPHSGSQANCAAYMSLIEPGDTVMGMDLAAGGHLTHGAPVSFSGQTYNFLSYSVDPETELLDFDAILKQAQEVKPKLIVAGASAYSQIIDFSKFREIADAVGAKLMVDMAHIAGLVAAGLHPSPVPYAHITTTTTHKTLRGPRGGLILTNDEELAKKINSAIFPGIQGGPLEHVVAAKAVSFKEVLDPAFKEYAANVIKNSKAMADVFLQDPDFRIISGGTENHLFLVDVTKVVENGKVAQNLLDEVNITLNKNSIPYETLSPFKTSGIRIGAAAITARGFGEEESRKVAELIIKTLKNSENEAVLEEVRSAVKELTDAFPLYED.

(6S)-5,6,7,8-tetrahydrofolate is bound by residues L121 and 125 to 127; that span reads GHL. K230 is subject to N6-(pyridoxal phosphate)lysine. (6S)-5,6,7,8-tetrahydrofolate is bound by residues E246 and 355–357; that span reads SPF.

This sequence belongs to the SHMT family. In terms of assembly, homodimer. Requires pyridoxal 5'-phosphate as cofactor.

It localises to the cytoplasm. It carries out the reaction (6R)-5,10-methylene-5,6,7,8-tetrahydrofolate + glycine + H2O = (6S)-5,6,7,8-tetrahydrofolate + L-serine. Its pathway is one-carbon metabolism; tetrahydrofolate interconversion. It functions in the pathway amino-acid biosynthesis; glycine biosynthesis; glycine from L-serine: step 1/1. Its function is as follows. Catalyzes the reversible interconversion of serine and glycine with tetrahydrofolate (THF) serving as the one-carbon carrier. This reaction serves as the major source of one-carbon groups required for the biosynthesis of purines, thymidylate, methionine, and other important biomolecules. Also exhibits THF-independent aldolase activity toward beta-hydroxyamino acids, producing glycine and aldehydes, via a retro-aldol mechanism. This Streptococcus pneumoniae serotype 2 (strain D39 / NCTC 7466) protein is Serine hydroxymethyltransferase.